Here is a 309-residue protein sequence, read N- to C-terminus: Taste receptor type 2 member 8 (309 aa).

Residues 1–7 (MFSPADN) lie on the Extracellular side of the membrane. A helical membrane pass occupies residues 8–28 (IFIILITGEFILGILGNGYIA). Residues 29 to 50 (LVNWIDWIKKKKISTTDYILTN) lie on the Cytoplasmic side of the membrane. A helical membrane pass occupies residues 51-71 (LVISRICLISVIVVNGIVTVL). At 72 to 82 (YPDVYTKSKLQ) the chain is on the extracellular side. Residues 83–103 (IAISTFWTFANYLNMWFTTCL) form a helical membrane-spanning segment. Residues 104-131 (NVFYFLKIANSSHPLFLWLKQKIDMVVR) lie on the Cytoplasmic side of the membrane. Residues 132–152 (WILLGCFAISLLVSLIIAIVL) traverse the membrane as a helical segment. Over 153–184 (SRDYRFHAIAKHKRNITEMFHVSKMLYFEPLT) the chain is Extracellular. Asparagine 167 is a glycosylation site (N-linked (GlcNAc...) asparagine). A helical membrane pass occupies residues 185 to 205 (LFNLLAIVPFIVSLMSFFLLV). Over 206–239 (RSLQRHTKQIKLYATGGRDPSTEAHVRAIKTMTS) the chain is Cytoplasmic. A helical transmembrane segment spans residues 240-260 (FIFFFFLYYITSLLVTFSYLM). Over 261–266 (TKYKLA) the chain is Extracellular. A helical membrane pass occupies residues 267–287 (MAFGEIVAILYPSGHSFILII). Topologically, residues 288 to 309 (LNNKLRQASVRMLTCIKITCVI) are cytoplasmic.

Belongs to the G-protein coupled receptor T2R family.

The protein localises to the membrane. Receptor that may play a role in the perception of bitterness and is gustducin-linked. May play a role in sensing the chemical composition of the gastrointestinal content. The activity of this receptor may stimulate alpha gustducin, mediate PLC-beta-2 activation and lead to the gating of TRPM5. The sequence is that of Taste receptor type 2 member 8 (TAS2R8) from Pongo pygmaeus (Bornean orangutan).